The following is a 677-amino-acid chain: Epithelial splicing regulatory protein 1 (677 aa).

RRM domains lie at 225–302 (TVVR…KATG), 326–406 (VIVR…RSTA), and 445–525 (DCVR…QCSA). S543 carries the post-translational modification Phosphoserine. The residue at position 578 (R578) is an Omega-N-methylarginine.

This sequence belongs to the ESRP family.

It localises to the nucleus. Its function is as follows. mRNA splicing factor that regulates the formation of epithelial cell-specific isoforms. Specifically regulates the expression of FGFR2-IIIb, an epithelial cell-specific isoform of FGFR2. Also regulates the splicing of CD44, CTNND1, ENAH, 3 transcripts that undergo changes in splicing during the epithelial-to-mesenchymal transition (EMT). Acts by directly binding specific sequences in mRNAs. Binds the GU-rich sequence motifs in the ISE/ISS-3, a cis-element regulatory region present in the mRNA of FGFR2. Regulates splicing and expression of genes involved in inner ear development, auditory hair cell differentiation, and cell fate specification in the cochlear epithelium. The protein is Epithelial splicing regulatory protein 1 (Esrp1) of Rattus norvegicus (Rat).